We begin with the raw amino-acid sequence, 254 residues long: TLC domain-containing protein At5g14285 (254 aa).

6 helical membrane-spanning segments follow: residues 12–32, 45–65, 82–101, 124–144, 172–192, and 211–231; these read DLPI…FIVF, SCLI…RAVF, TVLD…YIVF, FLVF…EVTS, LSPP…PLFF, and WLWI…ILWI. Residues 38–248 enclose the TLC domain; sequence QIRPEASSCL…FSERKANKIR (211 aa).

It localises to the membrane. This is TLC domain-containing protein At5g14285 from Arabidopsis thaliana (Mouse-ear cress).